A 468-amino-acid chain; its full sequence is Ribulose bisphosphate carboxylase large chain (468 aa).

K5 carries the post-translational modification N6,N6,N6-trimethyllysine. Residues N114 and T164 each coordinate substrate. The active-site Proton acceptor is K166. K168 contacts substrate. Residues K192, D194, and E195 each coordinate Mg(2+). At K192 the chain carries N6-carboxylysine. The active-site Proton acceptor is the H285. Residues R286, H318, and S370 each contribute to the substrate site.

The protein belongs to the RuBisCO large chain family. Type I subfamily. As to quaternary structure, heterohexadecamer of 8 large chains and 8 small chains; disulfide-linked. The disulfide link is formed within the large subunit homodimers. Requires Mg(2+) as cofactor. The disulfide bond which can form in the large chain dimeric partners within the hexadecamer appears to be associated with oxidative stress and protein turnover.

It is found in the plastid. Its subcellular location is the chloroplast. The catalysed reaction is 2 (2R)-3-phosphoglycerate + 2 H(+) = D-ribulose 1,5-bisphosphate + CO2 + H2O. It catalyses the reaction D-ribulose 1,5-bisphosphate + O2 = 2-phosphoglycolate + (2R)-3-phosphoglycerate + 2 H(+). RuBisCO catalyzes two reactions: the carboxylation of D-ribulose 1,5-bisphosphate, the primary event in carbon dioxide fixation, as well as the oxidative fragmentation of the pentose substrate in the photorespiration process. Both reactions occur simultaneously and in competition at the same active site. The sequence is that of Ribulose bisphosphate carboxylase large chain from Tecoma stans (Yellow bells).